Consider the following 839-residue polypeptide: Protein translocase subunit SecA (839 aa).

Residues Gln-85, 103-107 (GEGKT), and Asp-492 contribute to the ATP site. The segment at 794-820 (EINYSGPDAGDTKKEPVRRKEKKIGRN) is disordered. Zn(2+) is bound by residues Cys-823, Cys-825, Cys-834, and Cys-835.

Belongs to the SecA family. Monomer and homodimer. Part of the essential Sec protein translocation apparatus which comprises SecA, SecYEG and auxiliary proteins SecDF. Other proteins may also be involved. Requires Zn(2+) as cofactor.

The protein localises to the cell membrane. The protein resides in the cytoplasm. It catalyses the reaction ATP + H2O + cellular proteinSide 1 = ADP + phosphate + cellular proteinSide 2.. In terms of biological role, part of the Sec protein translocase complex. Interacts with the SecYEG preprotein conducting channel. Has a central role in coupling the hydrolysis of ATP to the transfer of proteins into and across the cell membrane, serving as an ATP-driven molecular motor driving the stepwise translocation of polypeptide chains across the membrane. The chain is Protein translocase subunit SecA from Clostridium acetobutylicum (strain ATCC 824 / DSM 792 / JCM 1419 / IAM 19013 / LMG 5710 / NBRC 13948 / NRRL B-527 / VKM B-1787 / 2291 / W).